The chain runs to 629 residues: tRNA uridine 5-carboxymethylaminomethyl modification enzyme MnmG (629 aa).

Residue 13-18 (GGGHAG) participates in FAD binding. 273–287 (GPRYCPSIEDKIHRF) lines the NAD(+) pocket.

It belongs to the MnmG family. Homodimer. Heterotetramer of two MnmE and two MnmG subunits. Requires FAD as cofactor.

The protein resides in the cytoplasm. Functionally, NAD-binding protein involved in the addition of a carboxymethylaminomethyl (cmnm) group at the wobble position (U34) of certain tRNAs, forming tRNA-cmnm(5)s(2)U34. This is tRNA uridine 5-carboxymethylaminomethyl modification enzyme MnmG from Shewanella denitrificans (strain OS217 / ATCC BAA-1090 / DSM 15013).